Here is a 146-residue protein sequence, read N- to C-terminus: Large ribosomal subunit protein mL41 (146 aa).

A mitochondrion-targeting transit peptide spans 1-16 (MKGSPISQFSKTSINA).

This sequence belongs to the mitochondrion-specific ribosomal protein mL41 family. In terms of assembly, component of the mitochondrial large ribosomal subunit (mt-LSU). Mature yeast 74S mitochondrial ribosomes consist of a small (37S) and a large (54S) subunit. The 37S small subunit contains a 15S ribosomal RNA (15S mt-rRNA) and 34 different proteins. The 54S large subunit contains a 21S rRNA (21S mt-rRNA) and 46 different proteins.

The protein resides in the mitochondrion. Its function is as follows. Component of the mitochondrial ribosome (mitoribosome), a dedicated translation machinery responsible for the synthesis of mitochondrial genome-encoded proteins, including at least some of the essential transmembrane subunits of the mitochondrial respiratory chain. The mitoribosomes are attached to the mitochondrial inner membrane and translation products are cotranslationally integrated into the membrane. This is Large ribosomal subunit protein mL41 (MRPL27) from Saccharomyces cerevisiae (strain ATCC 204508 / S288c) (Baker's yeast).